A 156-amino-acid chain; its full sequence is Cyclic pyranopterin monophosphate synthase (156 aa).

Substrate is bound by residues 75 to 77 (LCH) and 111 to 112 (ME). Asp126 is a catalytic residue.

The protein belongs to the MoaC family. In terms of assembly, homohexamer; trimer of dimers.

The catalysed reaction is (8S)-3',8-cyclo-7,8-dihydroguanosine 5'-triphosphate = cyclic pyranopterin phosphate + diphosphate. It participates in cofactor biosynthesis; molybdopterin biosynthesis. Its function is as follows. Catalyzes the conversion of (8S)-3',8-cyclo-7,8-dihydroguanosine 5'-triphosphate to cyclic pyranopterin monophosphate (cPMP). The polypeptide is Cyclic pyranopterin monophosphate synthase (Erythrobacter litoralis (strain HTCC2594)).